Consider the following 140-residue polypeptide: Organic hydroperoxide resistance protein-like (140 aa).

The protein belongs to the OsmC/Ohr family.

The sequence is that of Organic hydroperoxide resistance protein-like from Mycoplasma pneumoniae (strain ATCC 29342 / M129 / Subtype 1) (Mycoplasmoides pneumoniae).